A 322-amino-acid polypeptide reads, in one-letter code: Protease HtpX homolog (322 aa).

2 helical membrane-spanning segments follow: residues 19-39 (ILLI…CYLL) and 61-81 (FINL…IAYF). Histidine 165 provides a ligand contact to Zn(2+). Glutamate 166 is a catalytic residue. Residue histidine 169 participates in Zn(2+) binding. Helical transmembrane passes span 175–195 (VRLL…AQIA) and 216–236 (ILIL…ATLM). Glutamate 245 contacts Zn(2+).

The protein belongs to the peptidase M48B family. The cofactor is Zn(2+).

Its subcellular location is the cell inner membrane. The sequence is that of Protease HtpX homolog from Bacteroides fragilis (strain ATCC 25285 / DSM 2151 / CCUG 4856 / JCM 11019 / LMG 10263 / NCTC 9343 / Onslow / VPI 2553 / EN-2).